The following is a 261-amino-acid chain: MASPDWGYDGENGPEHWGKLYPIANGNNQSPIDIKTSETKRDPSLKPLSVSYNPATAKEIVNVGHSFHVNFEDSDNRSVLKGGPLSESYRLRQFHFHWGITDDCGSEHLVDGAKFSAELHLVHWNSAKYPSFADAASQADGLALIGVLVKVGQANPNLQKVLDALKAVKNKNKKAPFTNFDPSVLLPPSLDYWAYSGSLTHPPLHESVTWIIFKETISVSSEQLAQFRSLLANAEGDREVHIKQNNRPPQPLNGRTVKASF.

Position 2 is an N-acetylalanine (alanine 2). Residues 4 to 261 enclose the Alpha-carbonic anhydrase domain; sequence PDWGYDGENG…LNGRTVKASF (258 aa). The active-site Proton donor/acceptor is the histidine 65. Positions 95, 97, and 120 each coordinate Zn(2+). Residues threonine 200 and 200–201 contribute to the substrate site; that span reads TH.

This sequence belongs to the alpha-carbonic anhydrase family. It depends on Zn(2+) as a cofactor.

It is found in the cytoplasm. It catalyses the reaction hydrogencarbonate + H(+) = CO2 + H2O. It carries out the reaction urea = cyanamide + H2O. With respect to regulation, inhibited by acetazolamide. Its function is as follows. Catalyzes the reversible hydration of carbon dioxide. Can hydrate cyanamide to urea. This is Carbonic anhydrase 1 (CA1) from Bos taurus (Bovine).